We begin with the raw amino-acid sequence, 530 residues long: MEKRVVIAVILSIVVLYAFSYMFPPPVANQKEKAGPVAAVQSQPSSAKLSAIDSVPAAATPQAGLAARNIVVDTDLFIAVFSTKGGGLQSFQLKHYKDKAGAVGRDIVLKNESDGDKLSLLSEGKSFGLEPSLVFQSSAKDTKLAGTEKSSIEFTVTSQTGVILKKVYSFSGNGYGINLHQELINTGSSRVEGAISLINYNRLVAETGDGRYEVYGPVTMAGDKVITDKVSDIAKGPKQFDNNVSWSAFADKYFMDAVIAVKNSIASARVAKISDNYVQTNVTSSPLSLNPGQSASMDYRLFYGPKDLDILKAQGSRLEEAIDFGWFSALAKPLLRSIKFFYSYTHNYGLAIIIITIILKVLFFPLTHKSYKSMKEMQKLQPKMVELKEKFKNDRDAMNRAVMDLYKTHKVNPMGGCLPMLVQIPVFFALYKALMFSIELRHAPFVLWITDLSAKDPYYVTPIIMGVTMFIQQKMTPTNMDPIQAKMMLALPVVFTFMFLNFPAGLVLYWLINNILTIAQQAYINKSLPA.

The next 4 helical transmembrane spans lie at 5 to 25, 348 to 368, 418 to 438, and 492 to 512; these read VVIA…MFPP, YGLA…PLTH, LPML…MFSI, and PVVF…YWLI.

Belongs to the OXA1/ALB3/YidC family. Type 1 subfamily. In terms of assembly, interacts with the Sec translocase complex via SecD. Specifically interacts with transmembrane segments of nascent integral membrane proteins during membrane integration.

Its subcellular location is the cell inner membrane. Its function is as follows. Required for the insertion and/or proper folding and/or complex formation of integral membrane proteins into the membrane. Involved in integration of membrane proteins that insert both dependently and independently of the Sec translocase complex, as well as at least some lipoproteins. Aids folding of multispanning membrane proteins. This Geotalea daltonii (strain DSM 22248 / JCM 15807 / FRC-32) (Geobacter daltonii) protein is Membrane protein insertase YidC.